The chain runs to 210 residues: Imidazoleglycerol-phosphate dehydratase (210 aa).

The protein belongs to the imidazoleglycerol-phosphate dehydratase family.

The protein resides in the cytoplasm. The enzyme catalyses D-erythro-1-(imidazol-4-yl)glycerol 3-phosphate = 3-(imidazol-4-yl)-2-oxopropyl phosphate + H2O. It participates in amino-acid biosynthesis; L-histidine biosynthesis; L-histidine from 5-phospho-alpha-D-ribose 1-diphosphate: step 6/9. The protein is Imidazoleglycerol-phosphate dehydratase of Mycobacterium bovis (strain ATCC BAA-935 / AF2122/97).